Consider the following 232-residue polypeptide: UPF0502 protein mma_2112 (232 aa).

This sequence belongs to the UPF0502 family.

The polypeptide is UPF0502 protein mma_2112 (Janthinobacterium sp. (strain Marseille) (Minibacterium massiliensis)).